The primary structure comprises 131 residues: NADPH-dependent 7-cyano-7-deazaguanine reductase (131 aa).

The Thioimide intermediate role is filled by cysteine 41. Aspartate 48 serves as the catalytic Proton donor. Substrate-binding positions include 63–65 and 82–83; these read VEL and HE.

It belongs to the GTP cyclohydrolase I family. QueF type 1 subfamily.

It is found in the cytoplasm. It carries out the reaction 7-aminomethyl-7-carbaguanine + 2 NADP(+) = 7-cyano-7-deazaguanine + 2 NADPH + 3 H(+). The protein operates within tRNA modification; tRNA-queuosine biosynthesis. Functionally, catalyzes the NADPH-dependent reduction of 7-cyano-7-deazaguanine (preQ0) to 7-aminomethyl-7-deazaguanine (preQ1). The protein is NADPH-dependent 7-cyano-7-deazaguanine reductase of Nitratiruptor sp. (strain SB155-2).